The primary structure comprises 600 residues: MRLSQMLFVTLREDPAEAEIPSHKLLLRAGYIRRIGSGIYAYLPLMWRVLQKVSQIVRQEMNATGAQECLLPQLQPSELWKESGRWDTYTKAEGIMFALEDRQERELGLGPTHEEVITFIAREMIRSYRQLPVNLYQIQTKFRDEIRPRFGLMRGREFIMKDAYSFDTDPEGLKKTYQDMDKAYRNILRRCGLAFRAVDADSGAIGGSGSQEFMVLADAGEDEVLYTDDGKYAANVEKAVSLPPDEEPSPFKNYEKRETPNTDTIEKLAQFLKCSPTVVVKNILYEAVYDNGMIVLVLVNIRGDQEVNEVKLQNELVKLAPQYHAKTIIALKVPDESAQQKWAAKSLPLGYISPDLGDDYIQGSKEIASKFVRLVDKTVVELKNFVTGANEKGYHVLGANWGKEFKLPQLIVDVRTAKAGDRAVHDRTQTLQSARGIEVGHIFQLGTKYSHAMGATYTNEQGEEMPLVMGCYGIGVSRLAQSAVEQSYDKDGIIWPVAIAPYHAIVVIPNINDPQQVEVAEKLYTELNAAGIETLLDDRDERAGVKFKDSELVGIPYRIVTGRSLKEGKLEVVERATKKSQDIPIDEVVSTIQQWVKAAL.

The protein belongs to the class-II aminoacyl-tRNA synthetase family. ProS type 1 subfamily. In terms of assembly, homodimer.

The protein localises to the cytoplasm. It catalyses the reaction tRNA(Pro) + L-proline + ATP = L-prolyl-tRNA(Pro) + AMP + diphosphate. Catalyzes the attachment of proline to tRNA(Pro) in a two-step reaction: proline is first activated by ATP to form Pro-AMP and then transferred to the acceptor end of tRNA(Pro). As ProRS can inadvertently accommodate and process non-cognate amino acids such as alanine and cysteine, to avoid such errors it has two additional distinct editing activities against alanine. One activity is designated as 'pretransfer' editing and involves the tRNA(Pro)-independent hydrolysis of activated Ala-AMP. The other activity is designated 'posttransfer' editing and involves deacylation of mischarged Ala-tRNA(Pro). The misacylated Cys-tRNA(Pro) is not edited by ProRS. The protein is Proline--tRNA ligase of Gloeothece citriformis (strain PCC 7424) (Cyanothece sp. (strain PCC 7424)).